The chain runs to 1369 residues: Microtubule-associated tumor suppressor candidate 2 (1369 aa).

Disordered stretches follow at residues 180–262, 374–442, 477–509, 582–627, 791–839, 861–992, and 1331–1369; these read ASSS…TQTV, GRGN…FIPN, GENKTEVPEPLDPQSGRSEARESKEVTTSVAEN, NTSP…EERT, RSSA…LRPP, SSVS…QARE, and WKLQTGDPTSPIKLSPTSPVYRGSSSGPSSPARVSTTPR. Polar residues-rich tracts occupy residues 246–262 and 392–401; these read PSTSESKQSTPSETQTV and LHTTPKQGSA. A mediates interaction with MAPRE1 region spans residues 641-980; that stretch reads RPKIITYIRR…PKQRTAAARN (340 aa). The segment at 801–890 is sufficient for interaction with KIF2C; it reads GPITTATSLY…TRSTFGNEEQ (90 aa). The localization to the growing distal tip of microtubules stretch occupies residues 801–1150; sequence GPITTATSLY…HDAALLEMEN (350 aa). Residues 804–814 show a composition bias toward polar residues; that stretch reads TTATSLYSSDP. Over residues 821–834 the composition is skewed to low complexity; sequence ASSSNAAKSNLPKS. The segment covering 937–947 has biased composition (basic and acidic residues); sequence TKKDAQKDQDT. A coiled-coil region spans residues 991 to 1335; that stretch reads REAERQLVLR…NEELLWKLQT (345 aa). Over residues 1348 to 1369 the composition is skewed to low complexity; that stretch reads SPVYRGSSSGPSSPARVSTTPR.

This sequence in the C-terminal section; belongs to the MTUS1 family. As to quaternary structure, homodimer. Interacts with KIF2C and MAPRE1; the interaction is direct and probably targets MTUS2 and KIF2C to microtubules. Detected in embryonic stem cells differentiating to cardiomyocytes.

It localises to the cytoplasm. The protein resides in the cytoskeleton. In terms of biological role, binds microtubules. Together with MAPRE1 may target the microtubule depolymerase KIF2C to the plus-end of microtubules. May regulate the dynamics of microtubules at their growing distal tip. This is Microtubule-associated tumor suppressor candidate 2 (MTUS2) from Homo sapiens (Human).